The primary structure comprises 375 residues: Cobalt-precorrin-5B C(1)-methyltransferase (375 aa).

This sequence belongs to the CbiD family.

It carries out the reaction Co-precorrin-5B + S-adenosyl-L-methionine = Co-precorrin-6A + S-adenosyl-L-homocysteine. It functions in the pathway cofactor biosynthesis; adenosylcobalamin biosynthesis; cob(II)yrinate a,c-diamide from sirohydrochlorin (anaerobic route): step 6/10. Catalyzes the methylation of C-1 in cobalt-precorrin-5B to form cobalt-precorrin-6A. This Fusobacterium nucleatum subsp. nucleatum (strain ATCC 25586 / DSM 15643 / BCRC 10681 / CIP 101130 / JCM 8532 / KCTC 2640 / LMG 13131 / VPI 4355) protein is Cobalt-precorrin-5B C(1)-methyltransferase.